Reading from the N-terminus, the 184-residue chain is Dirigent protein 13 (184 aa).

The N-terminal stretch at 1-25 (MANQIYIISLIFLSVLLYQSTTVLS) is a signal peptide. Cysteines 36 and 182 form a disulfide. 2 N-linked (GlcNAc...) asparagine glycosylation sites follow: Asn55 and Asn119.

It belongs to the plant dirigent protein family. In terms of assembly, homodimer. As to expression, expressed in root vasculature and meristems, cotyledons, flowers, siliques, and leaf trichomes. Localized in the interfascicular/vascular cambia and developing xylem.

The protein localises to the secreted. It localises to the extracellular space. It is found in the apoplast. Dirigent proteins impart stereoselectivity on the phenoxy radical-coupling reaction, yielding optically active lignans from two molecules of coniferyl alcohol in the biosynthesis of lignans, flavonolignans, and alkaloids and thus plays a central role in plant secondary metabolism. The polypeptide is Dirigent protein 13 (DIR13) (Arabidopsis thaliana (Mouse-ear cress)).